The sequence spans 362 residues: Probable S-adenosylmethionine-dependent methyltransferase At5g37990 (362 aa).

Residues Tyr-19, Cys-66, Asn-71, Asp-107, Ser-136, and Phe-137 each coordinate S-adenosyl-L-homocysteine. Asn-175, Glu-261, and Phe-263 together coordinate Mg(2+).

It belongs to the methyltransferase superfamily. Type-7 methyltransferase family. In terms of assembly, homodimer. Requires Mg(2+) as cofactor.

The protein is Probable S-adenosylmethionine-dependent methyltransferase At5g37990 of Arabidopsis thaliana (Mouse-ear cress).